The following is a 315-amino-acid chain: Methionyl-tRNA formyltransferase (315 aa).

113-116 (SLLP) contacts (6S)-5,6,7,8-tetrahydrofolate.

The protein belongs to the Fmt family.

It catalyses the reaction L-methionyl-tRNA(fMet) + (6R)-10-formyltetrahydrofolate = N-formyl-L-methionyl-tRNA(fMet) + (6S)-5,6,7,8-tetrahydrofolate + H(+). In terms of biological role, attaches a formyl group to the free amino group of methionyl-tRNA(fMet). The formyl group appears to play a dual role in the initiator identity of N-formylmethionyl-tRNA by promoting its recognition by IF2 and preventing the misappropriation of this tRNA by the elongation apparatus. The polypeptide is Methionyl-tRNA formyltransferase (Yersinia enterocolitica serotype O:8 / biotype 1B (strain NCTC 13174 / 8081)).